A 486-amino-acid polypeptide reads, in one-letter code: Pup--protein ligase (486 aa).

Residue Glu33 coordinates Mg(2+). Arg76 is an ATP binding site. Tyr78 provides a ligand contact to Mg(2+). Catalysis depends on Asp80, which acts as the Proton acceptor. Glu86 contributes to the Mg(2+) binding site. ATP is bound by residues Thr89 and Trp451.

Belongs to the Pup ligase/Pup deamidase family. Pup-conjugating enzyme subfamily.

The enzyme catalyses ATP + [prokaryotic ubiquitin-like protein]-L-glutamate + [protein]-L-lysine = ADP + phosphate + N(6)-([prokaryotic ubiquitin-like protein]-gamma-L-glutamyl)-[protein]-L-lysine.. The protein operates within protein degradation; proteasomal Pup-dependent pathway. It functions in the pathway protein modification; protein pupylation. In terms of biological role, catalyzes the covalent attachment of the prokaryotic ubiquitin-like protein modifier Pup to the proteasomal substrate proteins, thereby targeting them for proteasomal degradation. This tagging system is termed pupylation. The ligation reaction involves the side-chain carboxylate of the C-terminal glutamate of Pup and the side-chain amino group of a substrate lysine. The polypeptide is Pup--protein ligase (Bifidobacterium longum (strain NCC 2705)).